The following is an 845-amino-acid chain: Lon protease (845 aa).

The 198-residue stretch at 45–242 folds into the Lon N-terminal domain; it reads MPILALRNMI…RLLYLLHKEL (198 aa). 393–400 is an ATP binding site; that stretch reads GPPGVGKT. The Lon proteolytic domain maps to 629-811; sequence NGDAGVVIGL…NEVLKEALLE (183 aa). Catalysis depends on residues serine 717 and lysine 760.

Belongs to the peptidase S16 family. Homohexamer. Organized in a ring with a central cavity.

The protein resides in the cytoplasm. The enzyme catalyses Hydrolysis of proteins in presence of ATP.. ATP-dependent serine protease that mediates the selective degradation of mutant and abnormal proteins as well as certain short-lived regulatory proteins. Required for cellular homeostasis and for survival from DNA damage and developmental changes induced by stress. Degrades polypeptides processively to yield small peptide fragments that are 5 to 10 amino acids long. Binds to DNA in a double-stranded, site-specific manner. The chain is Lon protease from Porphyromonas gingivalis (strain ATCC 33277 / DSM 20709 / CIP 103683 / JCM 12257 / NCTC 11834 / 2561).